Consider the following 222-residue polypeptide: Tetratricopeptide repeat protein 9A (222 aa).

2 disordered regions span residues 1 to 49 (MERK…AAAE) and 88 to 116 (KGLL…GRLS). The TPR 1 repeat unit spans residues 56 to 89 (RAHEFKSQGAQCYKDKKFREAIGKYHRALLELKG). Serine 105 is subject to Phosphoserine. 2 TPR repeats span residues 125–160 (AIEI…LKKE) and 161–194 (GENF…RTQQ).

It belongs to the TTC9 family.

The protein is Tetratricopeptide repeat protein 9A (TTC9) of Homo sapiens (Human).